Reading from the N-terminus, the 303-residue chain is D-alanine--D-alanine ligase (303 aa).

One can recognise an ATP-grasp domain in the interval Lys-103–Glu-293. Pro-130 to Thr-179 provides a ligand contact to ATP. Mg(2+)-binding residues include Asp-247, Glu-260, and Asn-262.

Belongs to the D-alanine--D-alanine ligase family. Requires Mg(2+) as cofactor. Mn(2+) is required as a cofactor.

The protein localises to the cytoplasm. It catalyses the reaction 2 D-alanine + ATP = D-alanyl-D-alanine + ADP + phosphate + H(+). It functions in the pathway cell wall biogenesis; peptidoglycan biosynthesis. Its function is as follows. Cell wall formation. This chain is D-alanine--D-alanine ligase, found in Methylacidiphilum infernorum (isolate V4) (Methylokorus infernorum (strain V4)).